Consider the following 248-residue polypeptide: Granulin (248 aa).

Belongs to the polyhedrin family.

In terms of biological role, component of the virus occlusion bodies, which are large proteinaceous structures, that protect the virus from the outside environment for extended periods until they are ingested by insect larvae. The chain is Granulin from Choristoneura fumiferana (Spruce budworm moth).